The sequence spans 203 residues: Ribosome maturation factor RimP (203 aa).

Positions 184–203 (RRGSAPVEDEEGEGEAPTAH) are disordered.

This sequence belongs to the RimP family.

It is found in the cytoplasm. Its function is as follows. Required for maturation of 30S ribosomal subunits. This chain is Ribosome maturation factor RimP, found in Methylobacterium nodulans (strain LMG 21967 / CNCM I-2342 / ORS 2060).